The chain runs to 1175 residues: Major DNA-binding protein (1175 aa).

A zinc finger lies at 496 to 509; sequence CSLCDRASRPACAH. The Required for filament formation motif lies at 825 to 826; it reads FW. The segment at 1151 to 1175 is required for nuclear localization; sequence KRPPPEDDLFDMGAPPEKRLTFDML.

Belongs to the herpesviridae major DNA-binding protein family. In terms of assembly, homooligomers. Forms double-helical filaments necessary for the formation of replication compartments within the host nucleus. Interacts with the origin-binding protein. Interacts with the helicase primase complex; this interaction stimulates primer synthesis activity of the helicase-primase complex. Interacts with the DNA polymerase. Interacts with the alkaline exonuclease; this interaction increases its nuclease processivity.

It is found in the host nucleus. Plays several crucial roles in viral infection. Participates in the opening of the viral DNA origin to initiate replication by interacting with the origin-binding protein. May disrupt loops, hairpins and other secondary structures present on ssDNA to reduce and eliminate pausing of viral DNA polymerase at specific sites during elongation. Promotes viral DNA recombination by performing strand-transfer, characterized by the ability to transfer a DNA strand from a linear duplex to a complementary single-stranded DNA circle. Can also catalyze the renaturation of complementary single strands. Additionally, reorganizes the host cell nucleus, leading to the formation of prereplicative sites and replication compartments. This process is driven by the protein which can form double-helical filaments in the absence of DNA. The protein is Major DNA-binding protein of Suid herpesvirus 1 (SuHV-1).